We begin with the raw amino-acid sequence, 56 residues long: Large ribosomal subunit protein bL33c (56 aa).

The protein belongs to the bacterial ribosomal protein bL33 family.

It is found in the plastid. The protein localises to the chloroplast. This is Large ribosomal subunit protein bL33c from Rhodomonas salina (Cryptomonas salina).